Reading from the N-terminus, the 268-residue chain is Small ribosomal subunit protein mS43 (268 aa).

The transit peptide at 1 to 23 directs the protein to the mitochondrion; the sequence is MLNTGLRKGLALSPITHLLKRCS.

Belongs to the mitochondrion-specific ribosomal protein mS43 family. In terms of assembly, component of the mitochondrial small ribosomal subunit (mt-SSU). Mature yeast 74S mitochondrial ribosomes consist of a small (37S) and a large (54S) subunit. The 37S small subunit contains a 15S ribosomal RNA (15S mt-rRNA) and at least 32 different proteins. The 54S large subunit contains a 21S rRNA (21S mt-rRNA) and at least 45 different proteins. mS43 forms a dimer with mS42, building a large protuberance adjacent to the mRNA channel exit in the mt-SSU body.

The protein resides in the mitochondrion. Functionally, component of the mitochondrial ribosome (mitoribosome), a dedicated translation machinery responsible for the synthesis of mitochondrial genome-encoded proteins, including at least some of the essential transmembrane subunits of the mitochondrial respiratory chain. The mitoribosomes are attached to the mitochondrial inner membrane and translation products are cotranslationally integrated into the membrane. The chain is Small ribosomal subunit protein mS43 from Schizosaccharomyces pombe (strain 972 / ATCC 24843) (Fission yeast).